The sequence spans 238 residues: Large ribosomal subunit protein uL2 (238 aa).

The tract at residues 198-238 (HPHGGGLHQSVSRPSTVSRNAPPGRKVGHIASRRTGRRGGA) is disordered. Over residues 206-216 (QSVSRPSTVSR) the composition is skewed to polar residues. Basic residues predominate over residues 223 to 238 (KVGHIASRRTGRRGGA).

It belongs to the universal ribosomal protein uL2 family. As to quaternary structure, part of the 50S ribosomal subunit. Forms a bridge to the 30S subunit in the 70S ribosome.

Its function is as follows. One of the primary rRNA binding proteins. Required for association of the 30S and 50S subunits to form the 70S ribosome, for tRNA binding and peptide bond formation. It has been suggested to have peptidyltransferase activity; this is somewhat controversial. Makes several contacts with the 16S rRNA in the 70S ribosome. The chain is Large ribosomal subunit protein uL2 from Sulfolobus acidocaldarius (strain ATCC 33909 / DSM 639 / JCM 8929 / NBRC 15157 / NCIMB 11770).